The primary structure comprises 468 residues: ATP synthase subunit beta (468 aa).

155-162 (GGAGVGKT) is a binding site for ATP.

It belongs to the ATPase alpha/beta chains family. F-type ATPases have 2 components, CF(1) - the catalytic core - and CF(0) - the membrane proton channel. CF(1) has five subunits: alpha(3), beta(3), gamma(1), delta(1), epsilon(1). CF(0) has three main subunits: a(1), b(2) and c(9-12). The alpha and beta chains form an alternating ring which encloses part of the gamma chain. CF(1) is attached to CF(0) by a central stalk formed by the gamma and epsilon chains, while a peripheral stalk is formed by the delta and b chains.

The protein localises to the cell membrane. The catalysed reaction is ATP + H2O + 4 H(+)(in) = ADP + phosphate + 5 H(+)(out). Produces ATP from ADP in the presence of a proton gradient across the membrane. The catalytic sites are hosted primarily by the beta subunits. This Streptococcus uberis (strain ATCC BAA-854 / 0140J) protein is ATP synthase subunit beta.